The chain runs to 270 residues: Phosphonoacetaldehyde hydrolase (270 aa).

The active-site Nucleophile is the D11. D11 and A13 together coordinate Mg(2+). Catalysis depends on K53, which acts as the Schiff-base intermediate with substrate. D187 serves as a coordination point for Mg(2+).

Belongs to the HAD-like hydrolase superfamily. PhnX family. As to quaternary structure, homodimer. Mg(2+) serves as cofactor.

It carries out the reaction phosphonoacetaldehyde + H2O = acetaldehyde + phosphate + H(+). In terms of biological role, involved in phosphonate degradation. This chain is Phosphonoacetaldehyde hydrolase, found in Salmonella gallinarum (strain 287/91 / NCTC 13346).